Reading from the N-terminus, the 246-residue chain is Ureidoacrylate amidohydrolase RutB (246 aa).

The segment at 1–27 (MSAVTAAGYQAPQERSQSVTLPARPEP) is disordered. Aspartate 41 (proton acceptor) is an active-site residue. Lysine 150 is an active-site residue. The active-site Nucleophile is cysteine 183.

Belongs to the isochorismatase family. RutB subfamily.

It carries out the reaction (Z)-3-ureidoacrylate + H2O + H(+) = (Z)-3-aminoacrylate + NH4(+) + CO2. The enzyme catalyses (Z)-3-ureidoacrylate + H2O = (Z)-3-aminoacrylate + carbamate + H(+). It catalyses the reaction (Z)-2-methylureidoacrylate + H2O + H(+) = (Z)-2-methylaminoacrylate + NH4(+) + CO2. In terms of biological role, hydrolyzes ureidoacrylate to form aminoacrylate and carbamate. The carbamate hydrolyzes spontaneously, thereby releasing one of the nitrogen atoms of the pyrimidine ring as ammonia and one of its carbon atoms as CO2. This Rhizobium rhizogenes (strain K84 / ATCC BAA-868) (Agrobacterium radiobacter) protein is Ureidoacrylate amidohydrolase RutB.